Reading from the N-terminus, the 154-residue chain is Myoglobin (154 aa).

A Globin domain is found at 2 to 148 (GLSEAEWQLV…FRKDIAAKYK (147 aa)). The residue at position 4 (serine 4) is a Phosphoserine. Histidine 65 contributes to the nitrite binding site. Histidine 65 contributes to the O2 binding site. Threonine 68 is subject to Phosphothreonine. Position 94 (histidine 94) interacts with heme b.

It belongs to the globin family. In terms of assembly, monomeric.

The protein resides in the cytoplasm. Its subcellular location is the sarcoplasm. It catalyses the reaction Fe(III)-heme b-[protein] + nitric oxide + H2O = Fe(II)-heme b-[protein] + nitrite + 2 H(+). The enzyme catalyses H2O2 + AH2 = A + 2 H2O. Functionally, monomeric heme protein which primary function is to store oxygen and facilitate its diffusion within muscle tissues. Reversibly binds oxygen through a pentacoordinated heme iron and enables its timely and efficient release as needed during periods of heightened demand. Depending on the oxidative conditions of tissues and cells, and in addition to its ability to bind oxygen, it also has a nitrite reductase activity whereby it regulates the production of bioactive nitric oxide. Under stress conditions, like hypoxia and anoxia, it also protects cells against reactive oxygen species thanks to its pseudoperoxidase activity. The polypeptide is Myoglobin (MB) (Mesoplodon carlhubbsi (Hubb's beaked whale)).